The primary structure comprises 130 residues: Ribosome-binding factor A (130 aa).

Positions 111–130 are disordered; sequence RDLDDVGPEATSSDEDAEQR.

The protein belongs to the RbfA family. As to quaternary structure, monomer. Binds 30S ribosomal subunits, but not 50S ribosomal subunits or 70S ribosomes.

The protein localises to the cytoplasm. Its function is as follows. One of several proteins that assist in the late maturation steps of the functional core of the 30S ribosomal subunit. Associates with free 30S ribosomal subunits (but not with 30S subunits that are part of 70S ribosomes or polysomes). Required for efficient processing of 16S rRNA. May interact with the 5'-terminal helix region of 16S rRNA. This is Ribosome-binding factor A from Xanthomonas euvesicatoria pv. vesicatoria (strain 85-10) (Xanthomonas campestris pv. vesicatoria).